Reading from the N-terminus, the 361-residue chain is tRNA-specific 2-thiouridylase MnmA (361 aa).

Residues 11–18 and Met37 each bind ATP; that span reads GMSGGVDS. Residue Cys106 is the Nucleophile of the active site. An intrachain disulfide couples Cys106 to Cys202. Gly130 provides a ligand contact to ATP. Positions 152–154 are interaction with tRNA; sequence KDQ. Cys202 serves as the catalytic Cysteine persulfide intermediate. Residues 308–309 form an interaction with tRNA region; it reads RY.

This sequence belongs to the MnmA/TRMU family.

The protein resides in the cytoplasm. It carries out the reaction S-sulfanyl-L-cysteinyl-[protein] + uridine(34) in tRNA + AH2 + ATP = 2-thiouridine(34) in tRNA + L-cysteinyl-[protein] + A + AMP + diphosphate + H(+). Catalyzes the 2-thiolation of uridine at the wobble position (U34) of tRNA, leading to the formation of s(2)U34. The sequence is that of tRNA-specific 2-thiouridylase MnmA from Clostridium botulinum (strain Eklund 17B / Type B).